The sequence spans 153 residues: 6,7-dimethyl-8-ribityllumazine synthase (153 aa).

Residues phenylalanine 22, alanine 56 to glutamate 58, and alanine 80 to isoleucine 82 contribute to the 5-amino-6-(D-ribitylamino)uracil site. Serine 85–threonine 86 contributes to the (2S)-2-hydroxy-3-oxobutyl phosphate binding site. Residue histidine 88 is the Proton donor of the active site. Phenylalanine 113 is a binding site for 5-amino-6-(D-ribitylamino)uracil. (2S)-2-hydroxy-3-oxobutyl phosphate is bound at residue arginine 127.

Belongs to the DMRL synthase family.

It catalyses the reaction (2S)-2-hydroxy-3-oxobutyl phosphate + 5-amino-6-(D-ribitylamino)uracil = 6,7-dimethyl-8-(1-D-ribityl)lumazine + phosphate + 2 H2O + H(+). It functions in the pathway cofactor biosynthesis; riboflavin biosynthesis; riboflavin from 2-hydroxy-3-oxobutyl phosphate and 5-amino-6-(D-ribitylamino)uracil: step 1/2. Its function is as follows. Catalyzes the formation of 6,7-dimethyl-8-ribityllumazine by condensation of 5-amino-6-(D-ribitylamino)uracil with 3,4-dihydroxy-2-butanone 4-phosphate. This is the penultimate step in the biosynthesis of riboflavin. This chain is 6,7-dimethyl-8-ribityllumazine synthase, found in Clostridium botulinum (strain Eklund 17B / Type B).